The sequence spans 198 residues: Phosphoheptose isomerase (198 aa).

The SIS domain occupies 40–198 (IIGALRGGHK…IEAALMQDAR (159 aa)). 55-57 (NGG) contacts substrate. Residues His64 and Glu68 each contribute to the Zn(2+) site. Substrate is bound by residues Glu68, 97–98 (ND), 123–125 (STS), Ser128, and Gln175. 2 residues coordinate Zn(2+): Gln175 and His183.

This sequence belongs to the SIS family. GmhA subfamily. As to quaternary structure, homotetramer. Zn(2+) serves as cofactor.

The protein resides in the cytoplasm. It carries out the reaction 2 D-sedoheptulose 7-phosphate = D-glycero-alpha-D-manno-heptose 7-phosphate + D-glycero-beta-D-manno-heptose 7-phosphate. Its pathway is carbohydrate biosynthesis; D-glycero-D-manno-heptose 7-phosphate biosynthesis; D-glycero-alpha-D-manno-heptose 7-phosphate and D-glycero-beta-D-manno-heptose 7-phosphate from sedoheptulose 7-phosphate: step 1/1. Catalyzes the isomerization of sedoheptulose 7-phosphate in D-glycero-D-manno-heptose 7-phosphate. This Bradyrhizobium sp. (strain ORS 278) protein is Phosphoheptose isomerase.